The sequence spans 279 residues: Ribosomal RNA small subunit methyltransferase A (279 aa).

S-adenosyl-L-methionine contacts are provided by asparagine 27, leucine 29, glycine 54, glutamate 76, aspartate 102, and asparagine 127.

The protein belongs to the class I-like SAM-binding methyltransferase superfamily. rRNA adenine N(6)-methyltransferase family. RsmA subfamily.

The protein resides in the cytoplasm. It catalyses the reaction adenosine(1518)/adenosine(1519) in 16S rRNA + 4 S-adenosyl-L-methionine = N(6)-dimethyladenosine(1518)/N(6)-dimethyladenosine(1519) in 16S rRNA + 4 S-adenosyl-L-homocysteine + 4 H(+). Functionally, specifically dimethylates two adjacent adenosines (A1518 and A1519) in the loop of a conserved hairpin near the 3'-end of 16S rRNA in the 30S particle. May play a critical role in biogenesis of 30S subunits. This Mesorhizobium japonicum (strain LMG 29417 / CECT 9101 / MAFF 303099) (Mesorhizobium loti (strain MAFF 303099)) protein is Ribosomal RNA small subunit methyltransferase A.